We begin with the raw amino-acid sequence, 231 residues long: Eukaryotic translation initiation factor 4E-1 (231 aa).

EIF4G-binding stretches follow at residues 56–59 and 66–102; these read HPLE and FDNS…NNIH. Residues 74–79, K106, and 124–125 each bind mRNA; these read RQTAWG and WE. C129 and C167 are joined by a disulfide. The tract at residues 150–159 is EIF4G-binding; that stretch reads YTLLAMIGHQ. Residues 174–179 and 219–223 each bind mRNA; these read RAKGEK and KRLDR.

This sequence belongs to the eukaryotic initiation factor 4E family. As to quaternary structure, EIF4F is a multi-subunit complex, the composition of which varies with external and internal environmental conditions. It is composed of at least EIF4A, EIF4E and EIF4G. EIF4E is also known to interact with other partners. In higher plants two isoforms of EIF4F have been identified, named isoform EIF4F and isoform EIF(iso)4F. Isoform EIF4F has subunits p220 and p26, whereas isoform EIF(iso)4F has subunits p82 and p28. In terms of assembly, (Microbial infection) Interacts with potyvirus viral genome-linked protein (VPg); this interaction is possible in susceptible hosts but impaired in resistant plants. In terms of processing, according to the redox status, the Cys-129-Cys-167 disulfide bridge may have a role in regulating protein function by affecting its ability to bind capped mRNA.

The protein resides in the nucleus. The protein localises to the cytoplasm. Functionally, component of the protein complex eIF4F, which is involved in the recognition of the mRNA cap, ATP-dependent unwinding of 5'-terminal secondary structure and recruitment of mRNA to the ribosome. Recognizes and binds the 7-methylguanosine-containing mRNA cap during an early step in the initiation of protein synthesis and facilitates ribosome binding by inducing the unwinding of the mRNAs secondary structures. Key component of recessive resistance to potyviruses. (Microbial infection) Susceptibility host factor required for viral infection (e.g. pepper mottle virus (PepMoV), potato virus Y (PVY) and tobacco etch virus (TEV)) by recruiting viral RNAs to the host ribosomal complex via an interaction with viral genome-linked protein (VPg). This Solanum habrochaites (Wild tomato) protein is Eukaryotic translation initiation factor 4E-1.